The chain runs to 245 residues: Demethylmenaquinone methyltransferase (245 aa).

S-adenosyl-L-methionine-binding positions include Thr-58, Asp-79, and 106 to 107 (NA).

This sequence belongs to the class I-like SAM-binding methyltransferase superfamily. MenG/UbiE family.

The catalysed reaction is a 2-demethylmenaquinol + S-adenosyl-L-methionine = a menaquinol + S-adenosyl-L-homocysteine + H(+). The protein operates within quinol/quinone metabolism; menaquinone biosynthesis; menaquinol from 1,4-dihydroxy-2-naphthoate: step 2/2. In terms of biological role, methyltransferase required for the conversion of demethylmenaquinol (DMKH2) to menaquinol (MKH2). The protein is Demethylmenaquinone methyltransferase of Halalkalibacterium halodurans (strain ATCC BAA-125 / DSM 18197 / FERM 7344 / JCM 9153 / C-125) (Bacillus halodurans).